Reading from the N-terminus, the 396-residue chain is KiSS-1 receptor (396 aa).

Residues 1–43 (MATEATLAPNVTWWAPSNASGCPGCGVNASDDPGSAPRPLDAW) are Extracellular-facing. 3 N-linked (GlcNAc...) asparagine glycosylation sites follow: Asn10, Asn18, and Asn28. A helical transmembrane segment spans residues 44–66 (LVPLFFATLMLLGLVGNSLVIYV). Residues 67-78 (ICRHKHMQTVTN) lie on the Cytoplasmic side of the membrane. The chain crosses the membrane as a helical span at residues 79-101 (FYIANLAATDVTFLLCCVPFTAL). The Extracellular segment spans residues 102 to 116 (LYPLPAWVLGDFMCK). Cys115 and Cys191 are joined by a disulfide. The helical transmembrane segment at 117–138 (FVNYIQQVSVQATCATLTAMSV) threads the bilayer. Residues 139–157 (DRWYVTVFPLRALHRRTPR) lie on the Cytoplasmic side of the membrane. A helical membrane pass occupies residues 158 to 180 (LALAVSLSIWVGSAAVSAPVLAL). Residues 181 to 203 (HRLSPGPRTYCSEAFPSRALERA) lie on the Extracellular side of the membrane. A helical transmembrane segment spans residues 204-224 (FALYNLLALYLLPLLATCACY). The Cytoplasmic portion of the chain corresponds to 225–260 (GAMLRHLGRAAVRPAPTDGALQGQLLAQRAGAVRTK). The chain crosses the membrane as a helical span at residues 261 to 283 (VSRLVAAVVLLFAACWGPIQLFL). The Extracellular segment spans residues 284–305 (VLQALGPSGAWHPRSYAAYAVK). A helical transmembrane segment spans residues 306-330 (IWAHCMSYSNSALNPLLYAFLGSHF). Over 331 to 396 (RQAFCRVCPC…CAQSERTASL (66 aa)) the chain is Cytoplasmic. The tract at residues 349 to 396 (HTSAHSDRAATHTVPHSRAAHPVRIRSPEPGNPVVRSPCAQSERTASL) is disordered. The span at 387–396 (CAQSERTASL) shows a compositional bias: polar residues.

Belongs to the G-protein coupled receptor 1 family. Highest level in the heart and 15- and 17-day embryos. Low level in other tissues. Colocalized with gonadotropin-releasing hormone (GnRH) neurons in the hypothalamus.

The protein localises to the cell membrane. In terms of biological role, receptor for metastin (kisspeptin-52 or kp-52), a C-terminally amidated peptide of KiSS1. KiSS1 is a metastasis suppressor protein. Activation of the receptor inhibits cell proliferation and cell migration, key characteristics of tumor metastasis. The receptor is essential for normal gonadotropin-released hormone physiology and for puberty. The hypothalamic KiSS1/KISS1R system is a pivotal factor in central regulation of the gonadotropic axis at puberty and in adulthood. Analysis of the transduction pathways activated by the receptor identifies coupling to phospholipase C and intracellular calcium release through pertussis toxin-insensitive G(q) proteins. The sequence is that of KiSS-1 receptor (Kiss1r) from Mus musculus (Mouse).